A 353-amino-acid chain; its full sequence is Methylthioribose-1-phosphate isomerase (353 aa).

Residues 51-53 (RGA), R94, and Q203 each bind substrate. The active-site Proton donor is the D244. 254–255 (NK) contacts substrate.

This sequence belongs to the eIF-2B alpha/beta/delta subunits family. MtnA subfamily.

The catalysed reaction is 5-(methylsulfanyl)-alpha-D-ribose 1-phosphate = 5-(methylsulfanyl)-D-ribulose 1-phosphate. The protein operates within amino-acid biosynthesis; L-methionine biosynthesis via salvage pathway; L-methionine from S-methyl-5-thio-alpha-D-ribose 1-phosphate: step 1/6. In terms of biological role, catalyzes the interconversion of methylthioribose-1-phosphate (MTR-1-P) into methylthioribulose-1-phosphate (MTRu-1-P). This Trichodesmium erythraeum (strain IMS101) protein is Methylthioribose-1-phosphate isomerase.